Reading from the N-terminus, the 65-residue chain is Small ribosomal subunit protein bS21B (65 aa).

Belongs to the bacterial ribosomal protein bS21 family.

This is Small ribosomal subunit protein bS21B from Geobacter sulfurreducens (strain ATCC 51573 / DSM 12127 / PCA).